The following is a 217-amino-acid chain: Somatotropin (217 aa).

Residues 1-26 (MATGSRTSLLLAFTLLCLPQLKEAGA) form the signal peptide. H44 lines the Zn(2+) pocket. An intrachain disulfide couples C79 to C191. S132 carries the post-translational modification Phosphoserine. E200 is a binding site for Zn(2+). The cysteines at positions 208 and 215 are disulfide-linked.

It belongs to the somatotropin/prolactin family.

The protein localises to the secreted. Its function is as follows. Plays an important role in growth control. Its major role in stimulating body growth is to stimulate the liver and other tissues to secrete IGF1. It stimulates both the differentiation and proliferation of myoblasts. It also stimulates amino acid uptake and protein synthesis in muscle and other tissues. The protein is Somatotropin (GH1) of Saimiri boliviensis boliviensis (Bolivian squirrel monkey).